The chain runs to 155 residues: Eosinophil cationic protein (155 aa).

A signal peptide spans 1–25 (MGLKLLESRLCLLLSLGLVLMLASC). The active-site Proton acceptor is the histidine 38. 4 cysteine pairs are disulfide-bonded: cysteine 47–cysteine 106, cysteine 61–cysteine 118, cysteine 79–cysteine 133, and cysteine 86–cysteine 94. 62–66 (KDINT) contributes to the substrate binding site. N-linked (GlcNAc...) asparagine glycans are attached at residues asparagine 88 and asparagine 107. The active-site Proton donor is histidine 150.

This sequence belongs to the pancreatic ribonuclease family.

It is found in the cytoplasmic granule. In terms of biological role, cytotoxin and helminthotoxin with ribonuclease activity. Possesses a wide variety of biological activities. This Rattus norvegicus (Rat) protein is Eosinophil cationic protein (Rnase3).